A 190-amino-acid polypeptide reads, in one-letter code: Xanthine phosphoribosyltransferase (190 aa).

Positions 20 and 27 each coordinate xanthine. Residue A128–A132 participates in 5-phospho-alpha-D-ribose 1-diphosphate binding. A xanthine-binding site is contributed by K156.

Belongs to the purine/pyrimidine phosphoribosyltransferase family. Xpt subfamily. Homodimer.

It is found in the cytoplasm. The enzyme catalyses XMP + diphosphate = xanthine + 5-phospho-alpha-D-ribose 1-diphosphate. Its pathway is purine metabolism; XMP biosynthesis via salvage pathway; XMP from xanthine: step 1/1. Converts the preformed base xanthine, a product of nucleic acid breakdown, to xanthosine 5'-monophosphate (XMP), so it can be reused for RNA or DNA synthesis. The chain is Xanthine phosphoribosyltransferase from Clostridium botulinum (strain Eklund 17B / Type B).